A 526-amino-acid polypeptide reads, in one-letter code: 2-isopropylmalate synthase (526 aa).

The 263-residue stretch at 5-267 (VIIFDTTLRD…HTGIRHQEIY (263 aa)) folds into the Pyruvate carboxyltransferase domain. Mn(2+) contacts are provided by Asp14, His202, His204, and Asn238. Residues 393–526 (RLEYFSVQSG…VPSISTSSTH (134 aa)) form a regulatory domain region.

Belongs to the alpha-IPM synthase/homocitrate synthase family. LeuA type 1 subfamily. As to quaternary structure, homodimer. Mn(2+) is required as a cofactor.

It is found in the cytoplasm. It carries out the reaction 3-methyl-2-oxobutanoate + acetyl-CoA + H2O = (2S)-2-isopropylmalate + CoA + H(+). It participates in amino-acid biosynthesis; L-leucine biosynthesis; L-leucine from 3-methyl-2-oxobutanoate: step 1/4. Catalyzes the condensation of the acetyl group of acetyl-CoA with 3-methyl-2-oxobutanoate (2-ketoisovalerate) to form 3-carboxy-3-hydroxy-4-methylpentanoate (2-isopropylmalate). The sequence is that of 2-isopropylmalate synthase from Edwardsiella ictaluri (strain 93-146).